The sequence spans 298 residues: NFU1 iron-sulfur cluster scaffold homolog, mitochondrial (298 aa).

Positions 194-262 (IKELLDTRIR…IPEVESVEQV (69 aa)) are nifU. 2 residues coordinate [4Fe-4S] cluster: C231 and C234.

Belongs to the NifU family.

It localises to the mitochondrion. Its function is as follows. Molecular scaffold for [Fe-S] cluster assembly of mitochondrial iron-sulfur proteins. This is NFU1 iron-sulfur cluster scaffold homolog, mitochondrial from Drosophila grimshawi (Hawaiian fruit fly).